A 408-amino-acid chain; its full sequence is Acetate kinase (408 aa).

N7 contacts Mg(2+). K14 contributes to the ATP binding site. R91 is a binding site for substrate. Residue D148 is the Proton donor/acceptor of the active site. ATP is bound by residues 208-212, 283-285, and 331-335; these read HLGNG, DFR, and GIGEN. E384 is a binding site for Mg(2+).

This sequence belongs to the acetokinase family. In terms of assembly, homodimer. Mg(2+) is required as a cofactor. Mn(2+) serves as cofactor.

It is found in the cytoplasm. It carries out the reaction acetate + ATP = acetyl phosphate + ADP. It functions in the pathway metabolic intermediate biosynthesis; acetyl-CoA biosynthesis; acetyl-CoA from acetate: step 1/2. Functionally, catalyzes the formation of acetyl phosphate from acetate and ATP. Can also catalyze the reverse reaction. The protein is Acetate kinase of Methanosarcina barkeri (strain Fusaro / DSM 804).